Reading from the N-terminus, the 287-residue chain is Lycopene elongase/hydratase (287 aa).

7 helical membrane passes run 15–35 (ISWV…AGEI), 37–57 (WLFW…MYGI), 97–117 (IPFL…WLTI), 137–157 (FIDA…GATI), 166–186 (MWIA…LGAV), 218–238 (LLAA…GIAI), and 265–285 (VFLW…IAIH).

It belongs to the UbiA prenyltransferase family.

The protein resides in the cell membrane. It catalyses the reaction all-trans-lycopene + dimethylallyl diphosphate + A + H2O = nonaflavuxanthin + AH2 + diphosphate. The catalysed reaction is nonaflavuxanthin + dimethylallyl diphosphate + A + H2O = flavuxanthin + AH2 + diphosphate. The protein operates within carotenoid biosynthesis. In terms of biological role, catalyzes the elongation of the C(40) carotenoid all-trans-lycopene to the acyclic C(50) carotenoid flavuxanthin during decaprenoxanthin biosynthesis. Acts as a bifunctional enzyme that catalyzes the elongation of lycopene by attaching a C(5) isoprene unit at C-2, as well as the hydroxylation of the new isoprene unit. The enzyme acts at both ends of the substrate, forming the C(50) carotenoid flavuxanthin via the C(45) intermediate nonaflavuxanthin. The polypeptide is Lycopene elongase/hydratase (Corynebacterium glutamicum (Brevibacterium saccharolyticum)).